We begin with the raw amino-acid sequence, 153 residues long: Subtilisin propeptide-like protein (153 aa).

A signal peptide spans 1 to 27 (MKFLFAFNFFSLYIYLYEFLCIHLCGS). The interval 127 to 153 (QISHLSEFIQYLLNKNVCIEFNQNVML) is dispensable for parasite growth in host erythrocytes.

It localises to the secreted. Its subcellular location is the parasitophorous vacuole lumen. It is found in the cell membrane. Functionally, acts as a specific inhibitor of subtilisin-like protease SUB1. The polypeptide is Subtilisin propeptide-like protein (Plasmodium falciparum (isolate 3D7)).